We begin with the raw amino-acid sequence, 309 residues long: GDP-6-deoxy-D-mannose reductase (309 aa).

Residues 11-12 (FV), R32, 47-48 (DI), and 71-73 (AKS) contribute to the NADP(+) site. Residue 114–115 (SS) participates in substrate binding. Y140 is an NADP(+) binding site. Substrate is bound by residues N169, D183, R209, and 269-272 (RPSE).

Belongs to the NAD(P)-dependent epimerase/dehydratase family. GDP-6-deoxy-D-mannose reductase subfamily.

The enzyme catalyses GDP-alpha-D-rhamnose + NAD(+) = GDP-4-dehydro-alpha-D-rhamnose + NADH + H(+). It carries out the reaction GDP-alpha-D-rhamnose + NADP(+) = GDP-4-dehydro-alpha-D-rhamnose + NADPH + H(+). In terms of biological role, reductase that catalyzes the conversion of GDP-6-deoxy-D-mannose to GDP-4-dehydro-6-deoxy-D-mannose (GDP-D-rhamnose). The chain is GDP-6-deoxy-D-mannose reductase (rmd) from Aneurinibacillus thermoaerophilus.